The chain runs to 91 residues: Large ribosomal subunit protein bL31B (91 aa).

Belongs to the bacterial ribosomal protein bL31 family. Type B subfamily. In terms of assembly, part of the 50S ribosomal subunit.

The protein is Large ribosomal subunit protein bL31B of Neisseria meningitidis serogroup C (strain 053442).